The sequence spans 757 residues: Protein lsd90 (757 aa).

4 stretches are compositionally biased toward polar residues: residues 1–11, 19–36, 51–69, and 94–118; these read MVGTINESMQN, TAQSAKQGIKNAGQSSSK, TAGNTANDGDSSYASSKNL, and DTSNVSPPSTQTGGYASKDTTSTYE. Disordered stretches follow at residues 1-131, 224-244, 589-633, and 657-757; these read MVGT…SRSS, ERAREAQSSIERSASLREKQA, AQAE…KSKS, and AYVG…MSNK. Positions 166 to 604 form a coiled coil; sequence DEKTLQDLLE…KVESEYNSVK (439 aa). The segment covering 589–598 has biased composition (basic and acidic residues); sequence AQAEQSKVES. Over residues 619–632 the composition is skewed to polar residues; that stretch reads VTTNEPTDVSTKSK. The span at 674–693 shows a compositional bias: low complexity; the sequence is STPSTLPTSASTNAAATTTT. ATP is bound at residue 718-725; the sequence is GTTGLGKS.

Its function is as follows. May be involved in the metabolism of very long-chain fatty acid-containing phospholipids (VLCFA-PL). In Schizosaccharomyces pombe (strain 972 / ATCC 24843) (Fission yeast), this protein is Protein lsd90 (lsd90).